Here is a 158-residue protein sequence, read N- to C-terminus: uncharacterized protein (158 aa).

The next 4 membrane-spanning stretches (helical) occupy residues 42–62, 71–91, 102–122, and 130–150; these read FHFA…GFLY, WIFI…HLIA, LLTG…QMFL, and ELII…PLLF.

Its subcellular location is the cell membrane. This is an uncharacterized protein from Bacillus subtilis (strain 168).